Here is a 336-residue protein sequence, read N- to C-terminus: Galactinol synthase 6 (336 aa).

K106 is a catalytic residue. Residues D122, D124, and H260 each contribute to the Mn(2+) site.

Belongs to the glycosyltransferase 8 family. Galactosyltransferase subfamily. The cofactor is a divalent metal cation.

It is found in the cytoplasm. The catalysed reaction is myo-inositol + UDP-alpha-D-galactose = alpha-D-galactosyl-(1-&gt;3)-1D-myo-inositol + UDP + H(+). Its function is as follows. Galactinol synthase involved in the biosynthesis of raffinose family oligosaccharides (RFOs) that function as osmoprotectants. May promote plant stress tolerance. The protein is Galactinol synthase 6 (GOLS6) of Arabidopsis thaliana (Mouse-ear cress).